The following is a 946-amino-acid chain: Glucoamylase 1 (946 aa).

A signal peptide spans 1–20 (MKLLSKVFVTALGLTSIVNA). Asn51, Asn68, Asn97, Asn187, Asn244, Asn373, Asn393, Asn406, and Asn437 each carry an N-linked (GlcNAc...) asparagine glycan. Residues Asp462 and Glu465 contribute to the active site. N-linked (GlcNAc...) asparagine glycosylation is present at Asn505. Residues 517 to 532 (AATKTTTTTSSSTSTS) are compositionally biased toward low complexity. The tract at residues 517–541 (AATKTTTTTSSSTSTSIDGKNTLAP) is disordered. N-linked (GlcNAc...) asparagine glycosylation occurs at Asn570. The active-site Proton donor is the Asp628. Residues Asn704, Asn772, Asn801, Asn895, and Asn912 are each glycosylated (N-linked (GlcNAc...) asparagine).

Belongs to the glycosyl hydrolase 31 family. Post-translationally, the N-terminus is blocked.

The protein resides in the secreted. It is found in the cell wall. The protein localises to the membrane. It catalyses the reaction Hydrolysis of terminal (1-&gt;4)-linked alpha-D-glucose residues successively from non-reducing ends of the chains with release of beta-D-glucose.. This Candida albicans (strain SC5314 / ATCC MYA-2876) (Yeast) protein is Glucoamylase 1 (GAM1).